A 291-amino-acid chain; its full sequence is Tyrosine isonitrile desaturase (291 aa).

The Fe cation site is built by His110, Asp112, and His259.

This sequence belongs to the TfdA dioxygenase family. As to quaternary structure, homotrimer in solution. Fe(2+) serves as cofactor.

It catalyses the reaction (2S)-3-(4-hydroxyphenyl)-2-isocyanopropanoate + 2-oxoglutarate + O2 = (2E)-3-(4-hydroxyphenyl)-2-isocyanoprop-2-enoate + succinate + CO2 + H2O. In terms of biological role, involved in the biosynthesis of paerucumarin, a cyclized isocyano derivative of tyrosine. Catalyzes the 2-oxoglutarate-dependent oxidation of tyrosine isonitrile. The protein is Tyrosine isonitrile desaturase of Pseudomonas aeruginosa (strain ATCC 15692 / DSM 22644 / CIP 104116 / JCM 14847 / LMG 12228 / 1C / PRS 101 / PAO1).